The primary structure comprises 269 residues: Dynein regulatory complex protein 8 (269 aa).

Residues 1–113 (MLGPGQVRLR…RTGKGLGYNS (113 aa)) are disordered. Over residues 54 to 76 (AQGSSSPGIQSGPSSRPGSPRGA) the composition is skewed to low complexity. EF-hand domains follow at residues 150 to 185 (EFHKKIKEAFEVFDHESNNTVDVREIGTIIRSLGCC) and 228 to 263 (IPEDVLLRAFEVLDSAKRGFLTKDELIKYMTEEDGV).

It belongs to the DRC8 family. In terms of assembly, component of the nexin-dynein regulatory complex (N-DRC).

It localises to the cytoplasm. It is found in the cytoskeleton. The protein localises to the flagellum axoneme. In terms of biological role, component of the nexin-dynein regulatory complex (N-DRC), a key regulator of ciliary/flagellar motility which maintains the alignment and integrity of the distal axoneme and regulates microtubule sliding in motile axonemes. In Homo sapiens (Human), this protein is Dynein regulatory complex protein 8 (EFCAB2).